The sequence spans 724 residues: Probable ATP-dependent RNA helicase DDX4 (724 aa).

Acidic residues predominate over residues methionine 1 to isoleucine 11. Disordered regions lie at residues methionine 1 to glutamate 25 and serine 37 to arginine 241. The segment covering serine 108 to arginine 130 has biased composition (basic and acidic residues). The segment covering glutamate 168–threonine 182 has biased composition (polar residues). A Q motif motif is present at residues leucine 286–lysine 314. A Helicase ATP-binding domain is found at isoleucine 317–phenylalanine 500. Alanine 330 to threonine 337 lines the ATP pocket. The DEAD box motif lies at aspartate 444 to aspartate 447. One can recognise a Helicase C-terminal domain in the interval aspartate 512–alanine 675. Over residues alanine 683–alanine 692 the composition is skewed to polar residues. Residues alanine 683–glycine 724 form a disordered region. A compositionally biased stretch (basic and acidic residues) spans serine 693–glycine 704. Residues aspartate 705–alanine 715 show a composition bias toward polar residues.

The protein belongs to the DEAD box helicase family. DDX4/VASA subfamily.

Its subcellular location is the cytoplasm. It catalyses the reaction ATP + H2O = ADP + phosphate + H(+). Probable ATP-dependent RNA helicase required during spermatogenesis to repress transposable elements and preventing their mobilization, which is essential for the germline integrity. Acts via the piRNA metabolic process, which mediates the repression of transposable elements during meiosis by forming complexes composed of piRNAs and Piwi proteins and governs the methylation and subsequent repression of transposons. Involved in the secondary piRNAs metabolic process, the production of piRNAs in fetal male germ cells through a ping-pong amplification cycle. The polypeptide is Probable ATP-dependent RNA helicase DDX4 (Pelophylax lessonae (Pool frog)).